The primary structure comprises 256 residues: Protein N-terminal and lysine N-methyltransferase EFM7 (256 aa).

The disordered stretch occupies residues 1–26; it reads MSDTESLNDALGLFDEPEDFRPEKPK. S-adenosyl-L-methionine-binding positions include tryptophan 64, 90–92, aspartate 112, tryptophan 145, and serine 168; that span reads GAA.

This sequence belongs to the class I-like SAM-binding methyltransferase superfamily. EFM7 family.

It is found in the cytoplasm. S-adenosyl-L-methionine-dependent protein methyltransferase that trimethylates the N-terminal glycine 'Gly-2' of elongation factor 1-alpha, before also catalyzing the mono- and dimethylation of 'Lys-3'. The sequence is that of Protein N-terminal and lysine N-methyltransferase EFM7 from Candida glabrata (strain ATCC 2001 / BCRC 20586 / JCM 3761 / NBRC 0622 / NRRL Y-65 / CBS 138) (Yeast).